Reading from the N-terminus, the 104-residue chain is Replication factor A protein 3 (104 aa).

The protein belongs to the replication factor A protein 3 family. Component of the heterotrimeric canonical replication protein A complex (RPA).

It is found in the nucleus. Its function is as follows. As part of the replication protein A (RPA/RP-A), a single-stranded DNA-binding heterotrimeric complex, may play an essential role in DNA replication, recombination and repair. Binds and stabilizes single-stranded DNA intermediates, preventing complementary DNA reannealing and recruiting different proteins involved in DNA metabolism. This chain is Replication factor A protein 3 (ssb3), found in Schizosaccharomyces pombe (strain 972 / ATCC 24843) (Fission yeast).